The following is a 312-amino-acid chain: Olfactory receptor 867 (312 aa).

The Extracellular segment spans residues 1-6 (MILNCN). A helical membrane pass occupies residues 7–30 (PFSGLFLSMYLVTVLGNLLIILAV). Residues 31–38 (SSNSHLHN) are Cytoplasmic-facing. Residues 39–60 (LMYFFLSNLSFVDICFISTTIP) traverse the membrane as a helical segment. Over 61–81 (KMLVNIHSQTKDISYIECLSQ) the chain is Extracellular. A disulfide bridge connects residues C78 and C160. A helical transmembrane segment spans residues 82 to 101 (VYFLTTFGGMDNFLLTLMAC). The Cytoplasmic segment spans residues 102-120 (DRYVAICHPLNYTVIMNLQ). The chain crosses the membrane as a helical span at residues 121 to 139 (LCALLILMFWLIMFCVSLI). At 140 to 177 (HVLLMNELNFSRGTEIPHFFCELAQVLKVANSDTHINN) the chain is on the extracellular side. The N-linked (GlcNAc...) asparagine glycan is linked to N148. A helical membrane pass occupies residues 178 to 200 (VFMYVVTSLLGLIPMTGILMSYS). At 201-217 (QIASSLLKMSSSVSKYK) the chain is on the cytoplasmic side. The helical transmembrane segment at 218–241 (AFSTCGSHLCVVSLFYGSATIVYF) threads the bilayer. Residues 242–253 (CSSVLHSTHKKM) are Extracellular-facing. The helical transmembrane segment at 254 to 273 (IASLMYTVISPMLNPFIYSL) threads the bilayer. Over 274 to 312 (RNKDVKGALGKLFIRVASCPLWSKDFRPKFILKPERQSL) the chain is Cytoplasmic.

The protein belongs to the G-protein coupled receptor 1 family. Epithelium of the tongue; including the taste buds.

The protein resides in the cell membrane. In terms of biological role, possible olfactory or taste receptor. The polypeptide is Olfactory receptor 867 (Olr867) (Rattus norvegicus (Rat)).